Reading from the N-terminus, the 340-residue chain is Ribosomal RNA small subunit methyltransferase C (340 aa).

It belongs to the methyltransferase superfamily. RsmC family. In terms of assembly, monomer.

It is found in the cytoplasm. It catalyses the reaction guanosine(1207) in 16S rRNA + S-adenosyl-L-methionine = N(2)-methylguanosine(1207) in 16S rRNA + S-adenosyl-L-homocysteine + H(+). In terms of biological role, specifically methylates the guanine in position 1207 of 16S rRNA in the 30S particle. The polypeptide is Ribosomal RNA small subunit methyltransferase C (Vibrio vulnificus (strain CMCP6)).